A 284-amino-acid polypeptide reads, in one-letter code: Tropomyosin (284 aa).

Positions Met1–Tyr284 form a coiled coil.

Belongs to the tropomyosin family. In terms of assembly, homodimer.

Functionally, tropomyosin, in association with the troponin complex, plays a central role in the calcium dependent regulation of muscle contraction. The polypeptide is Tropomyosin (Dermatophagoides pteronyssinus (European house dust mite)).